The sequence spans 92 residues: UPF0223 protein SERP0684 (92 aa).

Belongs to the UPF0223 family.

The chain is UPF0223 protein SERP0684 from Staphylococcus epidermidis (strain ATCC 35984 / DSM 28319 / BCRC 17069 / CCUG 31568 / BM 3577 / RP62A).